The chain runs to 753 residues: Eukaryotic translation initiation factor 3 subunit B (753 aa).

Positions 42-129 (TMLVVDNIPI…NVLHVNRFGD (88 aa)) constitute an RRM domain. WD repeat units lie at residues 142–185 (DLPS…WWNG), 203–241 (NSKW…GPIG), 321–362 (DTQS…LLDR), 537–580 (LDSK…DERR), and 595–640 (GEHY…LLHE). The stretch at 723–753 (KSKAKIDVKGQEARVEEWVEELIDETEELSM) forms a coiled coil.

It belongs to the eIF-3 subunit B family. Component of the eukaryotic translation initiation factor 3 (eIF-3) complex.

It is found in the cytoplasm. Functionally, RNA-binding component of the eukaryotic translation initiation factor 3 (eIF-3) complex, which is involved in protein synthesis of a specialized repertoire of mRNAs and, together with other initiation factors, stimulates binding of mRNA and methionyl-tRNAi to the 40S ribosome. The eIF-3 complex specifically targets and initiates translation of a subset of mRNAs involved in cell proliferation. The sequence is that of Eukaryotic translation initiation factor 3 subunit B from Cryptococcus neoformans var. neoformans serotype D (strain B-3501A) (Filobasidiella neoformans).